The primary structure comprises 240 residues: Superoxide dismutase [Cu-Zn] (240 aa).

A signal peptide spans 1–32; sequence MPKPADHRNHAAVSTSVLSALFLGAGAALLSA. The N-palmitoyl cysteine moiety is linked to residue C33. Residue C33 is the site of S-diacylglycerol cysteine attachment. Composition is skewed to polar residues over residues 36–51 and 68–77; these read PQHA…SIWT and GAQSLTSTLT. The interval 36–77 is disordered; the sequence is PQHASTVPGTTPSIWTGSPAPSGLSGHDEESPGAQSLTSTLT. Cu cation-binding residues include H116 and H118. A disulfide bridge links C123 with C234. Residues H146 and D158 each contribute to the Zn(2+) site. H195 is a binding site for Cu cation.

It belongs to the Cu-Zn superoxide dismutase family. Cu cation serves as cofactor. Zn(2+) is required as a cofactor.

The protein resides in the cell membrane. The enzyme catalyses 2 superoxide + 2 H(+) = H2O2 + O2. With respect to regulation, inhibited by the copper chelator diethyl dithiocarbamate. Its function is as follows. Destroys radicals which are normally produced within the cells and which are toxic to biological systems. May play a role in favoring mycobacterial survival in phagocytes. The chain is Superoxide dismutase [Cu-Zn] (sodC) from Mycobacterium bovis (strain ATCC BAA-935 / AF2122/97).